The sequence spans 379 residues: Occlusion-derived virus envelope protein E56 (379 aa).

The helical transmembrane segment at 156–176 (AGVGVLLAGGAYLTFSAATLV) threads the bilayer. Asparagine 184 carries N-linked (GlcNAc...) asparagine; by host glycosylation. A helical membrane pass occupies residues 320–340 (LMPLIWLIGAVLFLGLIIYLI).

The protein belongs to the baculoviridae E56 family.

The protein localises to the virion membrane. Functionally, structural protein that is specific for occlusion-derived virus (ODV) envelopes but not of budded virus (BV). This chain is Occlusion-derived virus envelope protein E56 (ODVP6E), found in Choristoneura fumiferana nuclear polyhedrosis virus (CfMNPV).